We begin with the raw amino-acid sequence, 437 residues long: Probable inactive DNA (cytosine-5)-methyltransferase DRM1B (437 aa).

2 UBA domains span residues 20–60 and 120–164; these read SAPS…LLQL and EMSE…IYAP. The SAM-dependent MTase DRM-type domain maps to 243–437; it reads VHRNLPDHAL…LIQLHTTSLC (195 aa).

It belongs to the class I-like SAM-binding methyltransferase superfamily. DRM-methyltransferase family.

It is found in the nucleus. In terms of biological role, involved in de novo DNA methylation. Involved in RNA-directed DNA methylation (RdDM). The polypeptide is Probable inactive DNA (cytosine-5)-methyltransferase DRM1B (Oryza sativa subsp. japonica (Rice)).